The following is a 183-amino-acid chain: ATP synthase subunit b, chloroplastic (183 aa).

The helical transmembrane segment at 33-51 (IINLSVVIGVVVSFGGDAL) threads the bilayer.

It belongs to the ATPase B chain family. In terms of assembly, F-type ATPases have 2 components, F(1) - the catalytic core - and F(0) - the membrane proton channel. F(1) has five subunits: alpha(3), beta(3), gamma(1), delta(1), epsilon(1). F(0) has four main subunits: a(1), b(1), b'(1) and c(10-14). The alpha and beta chains form an alternating ring which encloses part of the gamma chain. F(1) is attached to F(0) by a central stalk formed by the gamma and epsilon chains, while a peripheral stalk is formed by the delta, b and b' chains.

The protein localises to the plastid. It is found in the chloroplast thylakoid membrane. In terms of biological role, f(1)F(0) ATP synthase produces ATP from ADP in the presence of a proton or sodium gradient. F-type ATPases consist of two structural domains, F(1) containing the extramembraneous catalytic core and F(0) containing the membrane proton channel, linked together by a central stalk and a peripheral stalk. During catalysis, ATP synthesis in the catalytic domain of F(1) is coupled via a rotary mechanism of the central stalk subunits to proton translocation. Component of the F(0) channel, it forms part of the peripheral stalk, linking F(1) to F(0). In Oltmannsiellopsis viridis (Marine flagellate), this protein is ATP synthase subunit b, chloroplastic.